The primary structure comprises 108 residues: uncharacterized protein (108 aa).

Residues 1–24 form the signal peptide; it reads MNLWEFRFGKSFLFIPNFIMKVLA.

It to M.jannaschii MJ0803.

This is an uncharacterized protein from Methanocaldococcus jannaschii (strain ATCC 43067 / DSM 2661 / JAL-1 / JCM 10045 / NBRC 100440) (Methanococcus jannaschii).